The primary structure comprises 278 residues: Large ribosomal subunit protein uL2 (278 aa).

2 disordered regions span residues 1 to 58 and 210 to 278; these read MGIR…GGGH and GRMR…GKKR. Over residues 23 to 33 the composition is skewed to basic and acidic residues; that stretch reads EVTRSEPEKSL. Low complexity predominate over residues 40–49; that stretch reads SGGRNSTGRI. Basic residues-rich tracts occupy residues 210–220 and 269–278; these read GRMRWKGKRPS and VRRRRTGKKR.

It belongs to the universal ribosomal protein uL2 family. In terms of assembly, part of the 50S ribosomal subunit. Forms a bridge to the 30S subunit in the 70S ribosome.

In terms of biological role, one of the primary rRNA binding proteins. Required for association of the 30S and 50S subunits to form the 70S ribosome, for tRNA binding and peptide bond formation. It has been suggested to have peptidyltransferase activity; this is somewhat controversial. Makes several contacts with the 16S rRNA in the 70S ribosome. This is Large ribosomal subunit protein uL2 from Beutenbergia cavernae (strain ATCC BAA-8 / DSM 12333 / CCUG 43141 / JCM 11478 / NBRC 16432 / NCIMB 13614 / HKI 0122).